The primary structure comprises 403 residues: Cysteine desulfurase IscS (403 aa).

Pyridoxal 5'-phosphate contacts are provided by residues 73–74 (AT), Asn153, Gln181, and 201–203 (SAH). Lys204 is modified (N6-(pyridoxal phosphate)lysine). Thr241 contacts pyridoxal 5'-phosphate. The active-site Cysteine persulfide intermediate is the Cys326. [2Fe-2S] cluster is bound at residue Cys326.

Belongs to the class-V pyridoxal-phosphate-dependent aminotransferase family. NifS/IscS subfamily. As to quaternary structure, homodimer. Forms a heterotetramer with IscU, interacts with other sulfur acceptors. The cofactor is pyridoxal 5'-phosphate.

It localises to the cytoplasm. It carries out the reaction (sulfur carrier)-H + L-cysteine = (sulfur carrier)-SH + L-alanine. It participates in cofactor biosynthesis; iron-sulfur cluster biosynthesis. Functionally, master enzyme that delivers sulfur to a number of partners involved in Fe-S cluster assembly, tRNA modification or cofactor biosynthesis. Catalyzes the removal of elemental sulfur atoms from cysteine to produce alanine. Functions as a sulfur delivery protein for Fe-S cluster synthesis onto IscU, an Fe-S scaffold assembly protein, as well as other S acceptor proteins. The polypeptide is Cysteine desulfurase IscS (Methylococcus capsulatus (strain ATCC 33009 / NCIMB 11132 / Bath)).